A 36-amino-acid polypeptide reads, in one-letter code: Protein P4 (36 aa).

A helical membrane pass occupies residues G13–C33.

The protein resides in the host membrane. The polypeptide is Protein P4 (Vitis vinifera (Grape)).